Reading from the N-terminus, the 929-residue chain is Valine--tRNA ligase (929 aa).

The short motif at 59 to 69 (PNVTGSLHMGH) is the 'HIGH' region element. Positions 557–561 (KMSKS) match the 'KMSKS' region motif. Lys-560 provides a ligand contact to ATP. Residues 862 to 929 (LVDLDALRGR…LARQRLSDLG (68 aa)) are a coiled coil.

The protein belongs to the class-I aminoacyl-tRNA synthetase family. ValS type 1 subfamily. In terms of assembly, monomer.

It is found in the cytoplasm. It catalyses the reaction tRNA(Val) + L-valine + ATP = L-valyl-tRNA(Val) + AMP + diphosphate. In terms of biological role, catalyzes the attachment of valine to tRNA(Val). As ValRS can inadvertently accommodate and process structurally similar amino acids such as threonine, to avoid such errors, it has a 'posttransfer' editing activity that hydrolyzes mischarged Thr-tRNA(Val) in a tRNA-dependent manner. This Prochlorococcus marinus (strain MIT 9313) protein is Valine--tRNA ligase.